An 895-amino-acid polypeptide reads, in one-letter code: Pentatricopeptide repeat-containing protein At1g74600, chloroplastic (895 aa).

A chloroplast-targeting transit peptide spans 1–71 (MNCLANESLN…CNLRTTKILQ (71 aa)). PPR repeat units follow at residues 83 to 113 (DVFL…IPQP), 114 to 148 (DVVS…GFEA), 149 to 183 (NEIS…GYFF), 184 to 214 (YEVV…SLSA), 215 to 249 (NVYC…FQKP), 250 to 280 (DSYT…VIKC), 284 to 314 (DVFV…IPNP), 315 to 349 (SVVS…GVEI), 350 to 384 (NNCT…GFYL), 385 to 415 (DSSV…LDDI), 417 to 451 (RQNI…GLRT), 452 to 483 (DEFS…GLVL), 484 to 514 (DLTV…IPFK), 515 to 549 (DNAC…GTSP), 550 to 584 (DEST…GIDK), 585 to 615 (GMDL…LPEL), 616 to 650 (DPVS…GFTM), 651 to 685 (DSFA…GLCT), 686 to 716 (EPSV…INGP), 717 to 751 (DLIA…GFKP), 752 to 787 (DKVT…GIEP), and 788 to 818 (ENRH…MHIK). A type E motif; degenerate region spans residues 824–895 (WGTLLAACKI…VQKEPGWSSV (72 aa)).

The protein belongs to the PPR family. PCMP-E subfamily.

Its subcellular location is the plastid. It localises to the chloroplast. In Arabidopsis thaliana (Mouse-ear cress), this protein is Pentatricopeptide repeat-containing protein At1g74600, chloroplastic (PCMP-E69).